The chain runs to 339 residues: Adenylosuccinate synthetase (339 aa).

GTP is bound by residues 12–18 and 42–44; these read GDEGKGS and GHS. The active-site Proton acceptor is Asp13. 2 residues coordinate Mg(2+): Asp13 and Gly42. IMP is bound by residues 13 to 16, 40 to 43, Thr127, Arg141, Gln179, Thr194, and Arg256; these read DEGK and NAGH. His43 serves as the catalytic Proton donor. Position 252–258 (252–258) interacts with substrate; it reads TVTGRRR. GTP contacts are provided by residues Arg258, 284–286, and 324–326; these read MLD and KTG.

The protein belongs to the adenylosuccinate synthetase family. Homodimer. Mg(2+) is required as a cofactor.

Its subcellular location is the cytoplasm. It catalyses the reaction IMP + L-aspartate + GTP = N(6)-(1,2-dicarboxyethyl)-AMP + GDP + phosphate + 2 H(+). The protein operates within purine metabolism; AMP biosynthesis via de novo pathway; AMP from IMP: step 1/2. Its function is as follows. Plays an important role in the de novo pathway of purine nucleotide biosynthesis. Catalyzes the first committed step in the biosynthesis of AMP from IMP. In Pyrococcus horikoshii (strain ATCC 700860 / DSM 12428 / JCM 9974 / NBRC 100139 / OT-3), this protein is Adenylosuccinate synthetase.